A 251-amino-acid chain; its full sequence is Isoprenyl transferase (251 aa).

D24 is a catalytic residue. Position 24 (D24) interacts with Mg(2+). Residues 25-28, W29, R37, H41, and 69-71 each bind substrate; these read GNGR and STE. The active-site Proton acceptor is N72. Residues W73, R75, R186, and 192–194 contribute to the substrate site; that span reads RIS. Mg(2+) is bound at residue E205.

It belongs to the UPP synthase family. As to quaternary structure, homodimer. Requires Mg(2+) as cofactor.

Functionally, catalyzes the condensation of isopentenyl diphosphate (IPP) with allylic pyrophosphates generating different type of terpenoids. This is Isoprenyl transferase from Chromobacterium violaceum (strain ATCC 12472 / DSM 30191 / JCM 1249 / CCUG 213 / NBRC 12614 / NCIMB 9131 / NCTC 9757 / MK).